The primary structure comprises 272 residues: HMP-PP phosphatase (272 aa).

Residue aspartate 8 is the Nucleophile of the active site. Positions 8, 10, and 212 each coordinate Mg(2+).

It belongs to the HAD-like hydrolase superfamily. Cof family. Requires Mg(2+) as cofactor.

The enzyme catalyses 4-amino-2-methyl-5-(diphosphooxymethyl)pyrimidine + H2O = 4-amino-2-methyl-5-(phosphooxymethyl)pyrimidine + phosphate + H(+). Functionally, catalyzes the hydrolysis of 4-amino-2-methyl-5-hydroxymethylpyrimidine pyrophosphate (HMP-PP) to 4-amino-2-methyl-5-hydroxymethylpyrimidine phosphate (HMP-P). The protein is HMP-PP phosphatase of Escherichia coli (strain UTI89 / UPEC).